The sequence spans 256 residues: Geranylgeranylglyceryl phosphate synthase (256 aa).

D28 and S53 together coordinate Mg(2+). Residues Y172–G178, G203–G204, and G225–T226 each bind sn-glycerol 1-phosphate.

Belongs to the GGGP/HepGP synthase family. Group II subfamily. It depends on Mg(2+) as a cofactor.

The protein resides in the cytoplasm. The enzyme catalyses sn-glycerol 1-phosphate + (2E,6E,10E)-geranylgeranyl diphosphate = sn-3-O-(geranylgeranyl)glycerol 1-phosphate + diphosphate. Its pathway is membrane lipid metabolism; glycerophospholipid metabolism. Its function is as follows. Prenyltransferase that catalyzes the transfer of the geranylgeranyl moiety of geranylgeranyl diphosphate (GGPP) to the C3 hydroxyl of sn-glycerol-1-phosphate (G1P). This reaction is the first ether-bond-formation step in the biosynthesis of archaeal membrane lipids. This chain is Geranylgeranylglyceryl phosphate synthase, found in Methanococcus maripaludis (strain C5 / ATCC BAA-1333).